Reading from the N-terminus, the 355-residue chain is F-box only protein 32 (355 aa).

The Nuclear localization signal signature appears at 62 to 67 (KKRKKD). The short motif at 169–173 (LLQTL) is the Nuclear export signal element. One can recognise an F-box domain in the interval 223–271 (LTITDLPVCLQLNIMQRLSDGRDLVSLGQAAPDLHVLSEDRLLWKRLCQ). The Bipartite nuclear localization signal motif lies at 280-295 (RKRLILSDKGQLDWKK).

As to quaternary structure, part of the SCF (SKP1-CUL1-F-box) E3 ubiquitin-protein ligase complex SCF(FBXO32) formed of CUL1, SKP1, RBX1 and FBXO32. As to expression, specifically expressed in cardiac and skeletal muscle.

The protein localises to the cytoplasm. The protein resides in the nucleus. The protein operates within protein modification; protein ubiquitination. Functionally, substrate recognition component of a SCF (SKP1-CUL1-F-box protein) E3 ubiquitin-protein ligase complex which mediates the ubiquitination and subsequent proteasomal degradation of target proteins. Probably recognizes and binds to phosphorylated target proteins during skeletal muscle atrophy. Recognizes TERF1. This Mus musculus (Mouse) protein is F-box only protein 32 (Fbxo32).